We begin with the raw amino-acid sequence, 252 residues long: 5'-nucleotidase SurE (252 aa).

Residues Asp-8, Asp-9, Ser-39, and Asn-95 each contribute to the a divalent metal cation site.

Belongs to the SurE nucleotidase family. A divalent metal cation is required as a cofactor.

It is found in the cytoplasm. The enzyme catalyses a ribonucleoside 5'-phosphate + H2O = a ribonucleoside + phosphate. In terms of biological role, nucleotidase that shows phosphatase activity on nucleoside 5'-monophosphates. This is 5'-nucleotidase SurE from Clostridium botulinum (strain Loch Maree / Type A3).